The chain runs to 411 residues: MRIAMHLPLLLLYIFLLPLSGANNTDAAHEVIATNTNNWAVLVSTSRFWFNYRHMANVLSMYRTVKRLGIPDSQIILMLSDDVACNSRNLFPGSVFNNKDHAIDLYGDSVEVDYRGYEVTVENFIRLLTDRWTEDHPKSKRLLTDENSNIFIYMTGHGGDDFLKFQDAEEIASEDIADAFQQMYEKKRYNEIFFMIDTCQANTMYSKFYSPNILAVGSSEMDESSYSHHSDVEIGVAVIDRFTYYCLDFLEQIDKNSTLTLQDLFDSFTFEKIHSHVGVRTDLFDRNPSEVLITDFFANVQNVIPDDSKPLSVSHYHHYKDHIDTAQYELNNNVLDLALETYRKNNQSSKIEKKIKDIKSTSVLDVDIDSNECFFTSFKQSATIILALIVTILWFMLRGNTAKATYDLYTN.

Residues 1–22 form the signal peptide; it reads MRIAMHLPLLLLYIFLLPLSGA. Residues 23–376 are Lumenal-facing; sequence NNTDAAHEVI…DIDSNECFFT (354 aa). Active-site residues include H157 and C199. 2 N-linked (GlcNAc...) asparagine glycosylation sites follow: N256 and N346. A helical membrane pass occupies residues 377–397; it reads SFKQSATIILALIVTILWFML. The Cytoplasmic segment spans residues 398-411; sequence RGNTAKATYDLYTN.

It belongs to the peptidase C13 family. In terms of assembly, forms a complex with CDC91, GPI16, GPI17 and GAA1. The disulfide bond between GPI8 and GPI16 is important for normal enzyme activity.

The protein resides in the endoplasmic reticulum membrane. It participates in glycolipid biosynthesis; glycosylphosphatidylinositol-anchor biosynthesis. Functionally, mediates GPI anchoring in the endoplasmic reticulum, by replacing a protein's C-terminal GPI attachment signal peptide with a pre-assembled GPI. During this transamidation reaction, the GPI transamidase forms a carbonyl intermediate with the substrate protein. The protein is GPI-anchor transamidase (GPI8) of Saccharomyces cerevisiae (strain ATCC 204508 / S288c) (Baker's yeast).